The primary structure comprises 382 residues: Galactokinase (382 aa).

A substrate-binding site is contributed by 34-37 (EHTD). Residue 124–130 (GAGLSSS) coordinates ATP. Residues S130 and E162 each coordinate Mg(2+). The Proton acceptor role is filled by D174. Y223 is a substrate binding site.

It belongs to the GHMP kinase family. GalK subfamily.

It localises to the cytoplasm. The enzyme catalyses alpha-D-galactose + ATP = alpha-D-galactose 1-phosphate + ADP + H(+). The protein operates within carbohydrate metabolism; galactose metabolism. Functionally, catalyzes the transfer of the gamma-phosphate of ATP to D-galactose to form alpha-D-galactose-1-phosphate (Gal-1-P). The protein is Galactokinase of Shigella dysenteriae serotype 1 (strain Sd197).